We begin with the raw amino-acid sequence, 781 residues long: Catenin beta-1 (781 aa).

Ala2 carries the post-translational modification N-acetylalanine. The tract at residues 2–23 is interaction with VCL; it reads ATQADLMELDMAMEPDRKAAVS. Phosphoserine; by GSK3-beta; alternate is present on Ser23. Ser23 carries an O-linked (GlcNAc) serine; alternate glycan. Residue Ser29 is modified to Phosphoserine; by GSK3-beta. Residues Ser33 and Ser37 each carry the phosphoserine; by GSK3-beta and HIPK2 modification. Positions 34–56 are disordered; the sequence is GIHSGATTTAPSLSGKGNPEEED. Position 41 is a phosphothreonine; by GSK3-beta (Thr41). Ser45 carries the phosphoserine modification. Residue Lys49 is modified to N6-acetyllysine. Tyr64 carries the post-translational modification Phosphotyrosine; by PTK6. Tyr142 carries the post-translational modification Phosphotyrosine; by FYN and PTK6. 12 ARM repeats span residues 151–191, 193–234, 235–276, 277–318, 319–360, 361–389, 400–441, 442–484, 489–530, 531–571, 594–636, and 637–666; these read RAIP…IMRS, QMVS…IFKS, GGIP…VRLA, GGLQ…ILAS, GGPQ…IVEA, GGMQ…RNLS, GLLG…VCQV, GGIE…AQNA, YGLP…LREQ, GAIP…EIVE, NTIP…AEGA, and TAPL…SEDK. The interaction with BCL9 stretch occupies residues 156-178; the sequence is LTKLLNDEDQVVVNKAAVMVHQL. At Ser191 the chain carries Phosphoserine; by CDK5. Ser246 bears the Phosphoserine; by CDK5 mark. 2 positions are modified to phosphotyrosine: Tyr331 and Tyr333. The residue at position 552 (Ser552) is a Phosphoserine; by AMPK. Thr556 is subject to Phosphothreonine. Cys619 is subject to S-nitrosocysteine. Position 675 is a phosphoserine (Ser675). Positions 705–781 are disordered; that stretch reads EPLGYRQDDP…NQLAWFDTDL (77 aa). The span at 734-745 shows a compositional bias: basic and acidic residues; sequence MMEHEMGGHHPG. Residues 772 to 781 form an interaction with SCRIB region; that stretch reads NQLAWFDTDL.

Belongs to the beta-catenin family. Two separate complex-associated pools are found in the cytoplasm. The majority is present as component of an E-cadherin/ catenin adhesion complex composed of at least E-cadherin/CDH1 and beta-catenin/CTNNB1, and possibly alpha-catenin/CTNNA1; the complex is located to adherens junctions. The stable association of CTNNA1 is controversial as CTNNA1 was shown not to bind to F-actin when assembled in the complex. Alternatively, the CTNNA1-containing complex may be linked to F-actin by other proteins such as LIMA1. Another cytoplasmic pool is part of a large complex containing AXIN1, AXIN2, APC, CSNK1A1 and GSK3B that promotes phosphorylation on N-terminal Ser and Thr residues and ubiquitination of CTNNB1 via BTRC and its subsequent degradation by the proteasome. Wnt-dependent activation of DVL antagonizes the action of GSK3B. When GSK3B activity is inhibited the complex dissociates, CTNNB1 is dephosphorylated and is no longer targeted for destruction. The stabilized protein translocates to the nucleus, where it binds TCF/LEF-1 family members, BCL9, BCL9L and possibly also RUVBL1 and CHD8. Binds CTNNBIP and EP300. CTNNB1 forms a ternary complex with LEF1 and EP300 that is disrupted by CTNNBIP1 binding. Interacts with TAX1BP3 (via the PDZ domain); this interaction inhibits the transcriptional activity of CTNNB1. Interacts with AJAP1, BAIAP1, CARM1, CTNNA3, CXADR and PCDH11Y. Binds NHERF1. Interacts with GLIS2 and SLC30A9. Interacts with XIRP1 and MUC1. Interacts with PTPRU (via the cytoplasmic juxtamembrane domain) and with EMD. Interacts with SCRIB. Interacts with TNIK. Interacts with SESTD1 and TRPC4. Interacts directly with AXIN1; the interaction is regulated by CDK2 phosphorylation of AXIN1. Interacts with CAV1. Interacts with TRPV4. The TRPV4 and CTNNB1 complex can interact with CDH1. Interacts with VCL. Interacts with PTPRJ. Interacts with PKT7. Interacts with FAT1 (via the cytoplasmic domain). Interacts with NANOS1 and NDRG2. Interacts with NEK2, CDK2 and CDK5. Interacts with PTK6. Interacts with SOX7; this interaction may lead to proteasomal degradation of active CTNNB1 and thus inhibition of Wnt/beta-catenin-stimulated transcription. Identified in a complex with HINT1 and MITF. Interacts with FHIT. The CTNNB1 and TCF4 complex interacts with PML. Interacts with FERMT2. Identified in a complex with TCF4 and FERMT2. Interacts with RORA. May interact with P-cadherin/CDH3. Interacts with RAPGEF2. Interacts with RNF220. Interacts with CTNND2. Interacts (via the C-terminal region) with CBY1. The complex composed, at least, of APC, CTNNB1 and GSK3B interacts with JPT1; the interaction requires the inactive form of GSK3B (phosphorylated at 'Ser-9'). Interacts with DLG5. Interacts with FAM53B; promoting translocation to the nucleus. Interacts with TMEM170B. Interacts with AHI1. Interacts with GID8. Component of an cadherin:catenin adhesion complex composed of at least of CDH26, beta-catenin/CTNNB1, alpha-catenin/CTNNA1 and p120 catenin/CTNND1. Forms a complex comprising APPL1, RUVBL2, APPL2, HDAC1 and HDAC2. Interacts with IRF2BPL; mediates the ubiquitination and degradation of CTNNB1. Interacts with LMBR1L and AMFR. Interacts with LMBR1L. Interacts with SOX30; prevents interaction of CTNNB1 with TCF7L2/TCF4 and leads to inhibition of Wnt signaling. Interacts with SOX9; inhibiting CTNNB1 activity by competing with the binding sites of TCF/LEF within CTNNB1, thereby inhibiting the Wnt signaling. Interacts with SPN/CD43 cytoplasmic tail. Interacts (when phosphorylated at Tyr-333) with isoform M2 of PKM (PKM2); promoting transcription activation. Interacts with PKP2 (via HEAD domain). Interacts with CDH1. Interacts (when unphosphorylated) with FLYWCH1, perhaps preventing interaction of CTNNB1 with TCF4, and thereby regulating transcription activation; phosphorylation of CTNNB1 may inhibit the interaction. Interacts (via the central armadillo domains) with probable transcriptional regulator ADNP (via N-terminal region); interaction is direct and stabilizes CTNNB1 by modulating its phosphorylation by glycogen synthase kinase-3 beta GSK3B. Interacts with NR5A2. Interacts with DSG2; the interaction promotes localization of CTNNB1 at cell junctions thus reducing its nuclear localization and subsequent transcription of CTNNB1/TCF-target genes. In terms of processing, phosphorylation by GSK3B requires prior phosphorylation of Ser-45 by another kinase. Phosphorylation proceeds then from Thr-41 to Ser-33. Phosphorylated by NEK2. EGF stimulates tyrosine phosphorylation. Phosphorylated on Ser-33 and Ser-37 by HIPK2. This phosphorylation triggers proteasomal degradation. Phosphorylation at Ser-552 by AMPK promotes stabilization of the protein, enhancing TCF/LEF-mediated transcription. Phosphorylation on Ser-191 and Ser-246 by CDK5. Phosphorylation by CDK2 regulates insulin internalization. Phosphorylation by PTK6 at Tyr-64, Tyr-142, Tyr-331 and/or Tyr-333 with the predominant site at Tyr-64 is not essential for inhibition of transcriptional activity. Phosphorylation by SRC at Tyr-333 promotes interaction with isoform M2 of PKM (PKM2); promoting transcription activation. Ubiquitinated by the SCF(BTRC) E3 ligase complex when phosphorylated by GSK3B, leading to its degradation. Ubiquitinated by a E3 ubiquitin ligase complex containing UBE2D1, SIAH1, CACYBP/SIP, SKP1, APC and TBL1X, leading to its subsequent proteasomal degradation. Ubiquitinated and degraded following interaction with SOX9. Ubiquitinated via 'Lys-11'- and 'Lys-29'-linked ubiquitin chains by UBR5, leading to its stabilization. Post-translationally, S-nitrosylation at Cys-619 within adherens junctions promotes VEGF-induced, NO-dependent endothelial cell permeability by disrupting interaction with E-cadherin, thus mediating disassembly adherens junctions. In terms of processing, O-glycosylation at Ser-23 decreases nuclear localization and transcriptional activity, and increases localization to the plasma membrane and interaction with E-cadherin CDH1. Deacetylated at Lys-49 by SIRT1.

It is found in the cytoplasm. The protein resides in the nucleus. Its subcellular location is the cytoskeleton. It localises to the cell junction. The protein localises to the adherens junction. It is found in the cell membrane. The protein resides in the microtubule organizing center. Its subcellular location is the centrosome. It localises to the spindle pole. The protein localises to the synapse. It is found in the cilium basal body. Key downstream component of the canonical Wnt signaling pathway. In the absence of Wnt, forms a complex with AXIN1, AXIN2, APC, CSNK1A1 and GSK3B that promotes phosphorylation on N-terminal Ser and Thr residues and ubiquitination of CTNNB1 via BTRC and its subsequent degradation by the proteasome. In the presence of Wnt ligand, CTNNB1 is not ubiquitinated and accumulates in the nucleus, where it acts as a coactivator for transcription factors of the TCF/LEF family, leading to activate Wnt responsive genes. Also acts as a coactivator for other transcription factors, such as NR5A2. Promotes epithelial to mesenchymal transition/mesenchymal to epithelial transition (EMT/MET) via driving transcription of CTNNB1/TCF-target genes. Involved in the regulation of cell adhesion, as component of an E-cadherin:catenin adhesion complex. Acts as a negative regulator of centrosome cohesion. Involved in the CDK2/PTPN6/CTNNB1/CEACAM1 pathway of insulin internalization. Blocks anoikis of malignant kidney and intestinal epithelial cells and promotes their anchorage-independent growth by down-regulating DAPK2. Disrupts PML function and PML-NB formation by inhibiting RANBP2-mediated sumoylation of PML. Promotes neurogenesis by maintaining sympathetic neuroblasts within the cell cycle. Involved in chondrocyte differentiation via interaction with SOX9: SOX9-binding competes with the binding sites of TCF/LEF within CTNNB1, thereby inhibiting the Wnt signaling. Acts as a positive regulator of odontoblast differentiation during mesenchymal tooth germ formation, via promoting the transcription of differentiation factors such as LEF1, BMP2 and BMP4. Activity is repressed in a MSX1-mediated manner at the bell stage of mesenchymal tooth germ formation which prevents premature differentiation of odontoblasts. The protein is Catenin beta-1 of Bos taurus (Bovine).